The following is a 95-amino-acid chain: Aspartyl/glutamyl-tRNA(Asn/Gln) amidotransferase subunit C (95 aa).

The protein belongs to the GatC family. As to quaternary structure, heterotrimer of A, B and C subunits.

It catalyses the reaction L-glutamyl-tRNA(Gln) + L-glutamine + ATP + H2O = L-glutaminyl-tRNA(Gln) + L-glutamate + ADP + phosphate + H(+). The enzyme catalyses L-aspartyl-tRNA(Asn) + L-glutamine + ATP + H2O = L-asparaginyl-tRNA(Asn) + L-glutamate + ADP + phosphate + 2 H(+). Allows the formation of correctly charged Asn-tRNA(Asn) or Gln-tRNA(Gln) through the transamidation of misacylated Asp-tRNA(Asn) or Glu-tRNA(Gln) in organisms which lack either or both of asparaginyl-tRNA or glutaminyl-tRNA synthetases. The reaction takes place in the presence of glutamine and ATP through an activated phospho-Asp-tRNA(Asn) or phospho-Glu-tRNA(Gln). The sequence is that of Aspartyl/glutamyl-tRNA(Asn/Gln) amidotransferase subunit C from Bartonella bacilliformis (strain ATCC 35685 / KC583 / Herrer 020/F12,63).